The primary structure comprises 999 residues: Protein Smaug (999 aa).

A compositionally biased stretch (polar residues) spans 1–37 (MKYATGTDNAMTSGISGQTNNSNSVSNEMQPTTSTPT). Disordered regions lie at residues 1-45 (MKYA…EATS), 50-69 (TATY…QSQP), and 321-370 (CSSV…GSSS). Residues 321–338 (CSSVASSSMCPASGSRSS) are compositionally biased toward low complexity. Ser-564 and Ser-575 each carry phosphoserine. Residues 583-763 (EFKPNYIKFH…KDLKFKLSKM (181 aa)) are interaction with cup. Residues 600–654 (GIGLWLKSLRLHKYIELFKNMTYEEMLLITEDFLQSVGVTKGASHKLALCIDKLK) form the SAM domain. The segment at 773–892 (HVKPAGVGPN…HHHAQQMQQM (120 aa)) is disordered. Polar residues-rich tracts occupy residues 801–822 (KNGS…NFSL) and 854–864 (HQPQYKSSSYP). Residue Ser-972 is modified to Phosphoserine.

Belongs to the SMAUG family. Interacts with oskar (osk). Binds to the 3'-UTR of nos. Interacts with cup, which in turn recruits eIF4-E, leading to an indirect interaction between smg and eIF4-E that prevents mRNA translation.

The protein localises to the cytoplasm. Functionally, translation regulator that binds to the 3'-UTR of specific mRNAs such as nanos (nos) and prevent their translation. Prevents translation of unlocalized nos in the bulk cytoplasm via the recruitment of cup. The sequence is that of Protein Smaug (smg) from Drosophila yakuba (Fruit fly).